The sequence spans 136 residues: HetP-like commitment protein Alr2902 (136 aa).

Positions 94 to 109 (KASTQDLNQSNNSDYL) are enriched in polar residues. The disordered stretch occupies residues 94 to 120 (KASTQDLNQSNNSDYLTTPEPDKRGNI).

It belongs to the HetP family. In terms of assembly, in bacterial two-hybrid assays interacts robustly with HetR and Alr3234 and weakly with itself, HetP and Asl1930.

Functionally, delays heterocyst differentiation and commitment when nitrogen is limiting. Interplay between the 4 HetP paralogs controls the timing of commitment to heterocyst formation and its duration. Epistatic analysis show that the 3 paralogs act upstream of hetP to delay commitment (asl1930, alr3234) or inhibit development (alr2902). Asl1930 and Alr3234 must also attenuate the activity of Alr2902. When only this homolog is present no heterocysts are formed, showing it inhibits development. Ectopic expression partially complements a hetP deletion. In Nostoc sp. (strain PCC 7120 / SAG 25.82 / UTEX 2576), this protein is HetP-like commitment protein Alr2902.